The chain runs to 383 residues: Cysteine protease StiP (383 aa).

The protein belongs to the cysteine protease StiP family. Post-translationally, is probably processed via an autocatalytic removal of a proregion of about 100 amino acids.

Its activity is regulated as follows. Is inhibited by bromopyruvate in vitro. Activity is not affected by the presence of tellurite. Functionally, cysteine protease that may play a role in regulating cell morphology in response to stressful conditions which likely cause oxidative damage. Appears to catalyze its own cleavage, which probably leads to its activation. In Acinetobacter baylyi (strain ATCC 33305 / BD413 / ADP1), this protein is Cysteine protease StiP (stiP).